Here is a 262-residue protein sequence, read N- to C-terminus: 5'-nucleotidase SurE (262 aa).

Positions 8, 9, 41, and 97 each coordinate a divalent metal cation.

This sequence belongs to the SurE nucleotidase family. Requires a divalent metal cation as cofactor.

It localises to the cytoplasm. The catalysed reaction is a ribonucleoside 5'-phosphate + H2O = a ribonucleoside + phosphate. In terms of biological role, nucleotidase that shows phosphatase activity on nucleoside 5'-monophosphates. This Methanococcus maripaludis (strain DSM 14266 / JCM 13030 / NBRC 101832 / S2 / LL) protein is 5'-nucleotidase SurE.